Reading from the N-terminus, the 188-residue chain is dCTP deaminase (188 aa).

DCTP contacts are provided by residues 111–116 (KSTYAR), 135–137 (TLE), glutamine 156, tyrosine 170, and glutamine 180. Glutamate 137 serves as the catalytic Proton donor/acceptor.

This sequence belongs to the dCTP deaminase family. In terms of assembly, homotrimer.

It carries out the reaction dCTP + H2O + H(+) = dUTP + NH4(+). Its pathway is pyrimidine metabolism; dUMP biosynthesis; dUMP from dCTP (dUTP route): step 1/2. Functionally, catalyzes the deamination of dCTP to dUTP. The polypeptide is dCTP deaminase (Neisseria gonorrhoeae (strain ATCC 700825 / FA 1090)).